The primary structure comprises 244 residues: Extracellular superoxide dismutase [Cu-Zn] (244 aa).

Residues 1–18 (MLALVCSCLLLAALPADT) form the signal peptide. 2 disulfide bridges follow: C67/C212 and C129/C211. An N-linked (GlcNAc...) asparagine glycan is attached at N111. The Cu cation site is built by H118, H120, and H135. H135, H143, H146, and D149 together coordinate Zn(2+). H185 lines the Cu cation pocket. A disordered region spans residues 221–244 (PWARQAQEHAERKKRRRESECKAA). Residues 226 to 244 (AQEHAERKKRRRESECKAA) show a composition bias toward basic and acidic residues.

It belongs to the Cu-Zn superoxide dismutase family. Homotetramer. Directly interacts with ATP7A; this interaction is copper-dependent and is required for SOD3 activity. Cu cation is required as a cofactor. Zn(2+) serves as cofactor.

It is found in the secreted. Its subcellular location is the extracellular space. The protein localises to the golgi apparatus. It localises to the trans-Golgi network. The catalysed reaction is 2 superoxide + 2 H(+) = H2O2 + O2. Protect the extracellular space from toxic effect of reactive oxygen intermediates by converting superoxide radicals into hydrogen peroxide and oxygen. In Oryctolagus cuniculus (Rabbit), this protein is Extracellular superoxide dismutase [Cu-Zn] (SOD3).